The sequence spans 5263 residues: Fibroin heavy chain (5263 aa).

The first 21 residues, 1–21, serve as a signal peptide directing secretion; sequence MRVKTFVILCCALQYVAYTNA. Residues 149-5206 are highly repetitive; sequence AAVGAGAGAG…GSGAGAGGSV (5058 aa). Cys-5260 and Cys-5263 are disulfide-bonded.

Silk fibroin elementary unit consists in a disulfide-linked heavy and light chain and a p25 glycoprotein in molar ratios of 6:6:1. This results in a complex of approximately 2.3 MDa. Post-translationally, the interchain disulfide bridge is essential for the intracellular transport and secretion of fibroin. Produced exclusively in the posterior (PSG) section of silk glands, which are essentially modified salivary glands.

Functionally, core component of the silk filament; a strong, insoluble and chemically inert fiber. This Bombyx mori (Silk moth) protein is Fibroin heavy chain (FIBH).